The sequence spans 223 residues: Adenylate kinase (223 aa).

10 to 15 (GSGKGT) is an ATP binding site. The segment at 30–59 (ESGAIFRKHIGGGTELGMKAKEYIDKGELV) is NMP. Residues Ser31, Arg36, 57–59 (ELV), 84–87 (GFPR), and Gln91 each bind AMP. The segment at 125 to 164 (GRRLCENDPNHPNNKFIDAIKPDGDKCRVCGGALSERADD) is LID. Arg126 provides a ligand contact to ATP. The AMP site is built by Arg161 and Arg173. Gly209 serves as a coordination point for ATP.

Belongs to the adenylate kinase family. Monomer.

It localises to the cytoplasm. The catalysed reaction is AMP + ATP = 2 ADP. It participates in purine metabolism; AMP biosynthesis via salvage pathway; AMP from ADP: step 1/1. Catalyzes the reversible transfer of the terminal phosphate group between ATP and AMP. Plays an important role in cellular energy homeostasis and in adenine nucleotide metabolism. This Maridesulfovibrio salexigens (strain ATCC 14822 / DSM 2638 / NCIMB 8403 / VKM B-1763) (Desulfovibrio salexigens) protein is Adenylate kinase.